A 483-amino-acid polypeptide reads, in one-letter code: Acetyl-coenzyme A carboxylase carboxyl transferase subunit beta, chloroplastic (483 aa).

The 265-residue stretch at 219–483 (LWVQCENCYG…LHTFFPLNQN (265 aa)) folds into the CoA carboxyltransferase N-terminal domain. The Zn(2+) site is built by cysteine 223, cysteine 226, cysteine 242, and cysteine 245. The C4-type zinc-finger motif lies at 223–245 (CENCYGLNYKKFFKSKMNLCEQC).

It belongs to the AccD/PCCB family. As to quaternary structure, acetyl-CoA carboxylase is a heterohexamer composed of biotin carboxyl carrier protein, biotin carboxylase and 2 subunits each of ACCase subunit alpha and ACCase plastid-coded subunit beta (accD). The cofactor is Zn(2+).

The protein localises to the plastid. Its subcellular location is the chloroplast stroma. The enzyme catalyses N(6)-carboxybiotinyl-L-lysyl-[protein] + acetyl-CoA = N(6)-biotinyl-L-lysyl-[protein] + malonyl-CoA. It participates in lipid metabolism; malonyl-CoA biosynthesis; malonyl-CoA from acetyl-CoA: step 1/1. Component of the acetyl coenzyme A carboxylase (ACC) complex. Biotin carboxylase (BC) catalyzes the carboxylation of biotin on its carrier protein (BCCP) and then the CO(2) group is transferred by the transcarboxylase to acetyl-CoA to form malonyl-CoA. The protein is Acetyl-coenzyme A carboxylase carboxyl transferase subunit beta, chloroplastic of Guizotia abyssinica (Niger).